Consider the following 703-residue polypeptide: Ion-translocating oxidoreductase complex subunit C (703 aa).

4Fe-4S ferredoxin-type domains follow at residues 368-397 and 407-436; these read MAPQ…QQLY and KARN…VQYY. 8 residues coordinate [4Fe-4S] cluster: cysteine 377, cysteine 380, cysteine 383, cysteine 387, cysteine 416, cysteine 419, cysteine 422, and cysteine 426. Disordered regions lie at residues 505–558 and 653–674; these read AVPA…EDPR and AQQA…EEDP. A compositionally biased stretch (basic and acidic residues) spans 524–539; sequence AAREARKAQARERRAQ.

This sequence belongs to the 4Fe4S bacterial-type ferredoxin family. RnfC subfamily. The complex is composed of six subunits: RnfA, RnfB, RnfC, RnfD, RnfE and RnfG. It depends on [4Fe-4S] cluster as a cofactor.

Its subcellular location is the cell inner membrane. In terms of biological role, part of a membrane-bound complex that couples electron transfer with translocation of ions across the membrane. This chain is Ion-translocating oxidoreductase complex subunit C, found in Serratia proteamaculans (strain 568).